A 65-amino-acid polypeptide reads, in one-letter code: Defensin-B3 (65 aa).

The N-terminal stretch at 1–21 (MRLLLVFFFLSLLDQAPPARS) is a signal peptide. 3 disulfides stabilise this stretch: Cys29–Cys58, Cys36–Cys50, and Cys40–Cys59. Positions 62–65 (ESPR) are excised as a propeptide.

It belongs to the beta-defensin family. In terms of tissue distribution, lowly expressed in spleen, and expressed at lower levels in kidney, lung and testis.

The protein resides in the secreted. In terms of biological role, has antimicrobial activity. This is Defensin-B3 from Ornithorhynchus anatinus (Duckbill platypus).